The sequence spans 342 residues: Non-homologous end-joining protein 1 (342 aa).

Transmembrane regions (helical) follow at residues 27 to 47 and 129 to 149; these read LLLFLPMSSPTTIVMIVLVSL and MFYMILQSLCMLLLKLVNLST. The interaction with LIF1 stretch occupies residues 173–342; sequence LRDLDGGSKV…RKFGKVRIKN (170 aa). A disordered region spans residues 270 to 342; it reads ADPTNEARPN…RKFGKVRIKN (73 aa). Residues 286–296 are compositionally biased toward basic and acidic residues; that stretch reads PKTDFKPKSRE. The segment covering 297-312 has biased composition (polar residues); it reads SSTSSQLRLENFSESE. Basic residues predominate over residues 331–342; sequence KKRKFGKVRIKN.

This sequence belongs to the XRCC4-XLF family. XLF subfamily. As to quaternary structure, interacts (via C-terminus) with LIF1 (via N-terminus); the interaction is direct. Interacts with DNL4.

The protein resides in the cytoplasm. The protein localises to the nucleus membrane. Its function is as follows. Involved in non-homologous end joining (NHEJ). Facilitates the transport of LIF1 into the nucleus, where it can interact with DNA ligase DNL4 to repair double-strand breaks (DSB). Mediates mating-type regulation of NHEJ. Prevents chromosome circularisation by NHEJ in absence of telomerase. The protein is Non-homologous end-joining protein 1 (NEJ1) of Saccharomyces cerevisiae (strain ATCC 204508 / S288c) (Baker's yeast).